A 169-amino-acid polypeptide reads, in one-letter code: S-ribosylhomocysteine lyase (169 aa).

H54, H58, and C128 together coordinate Fe cation.

This sequence belongs to the LuxS family. Homodimer. It depends on Fe cation as a cofactor.

It carries out the reaction S-(5-deoxy-D-ribos-5-yl)-L-homocysteine = (S)-4,5-dihydroxypentane-2,3-dione + L-homocysteine. Its function is as follows. Involved in the synthesis of autoinducer 2 (AI-2) which is secreted by bacteria and is used to communicate both the cell density and the metabolic potential of the environment. The regulation of gene expression in response to changes in cell density is called quorum sensing. Catalyzes the transformation of S-ribosylhomocysteine (RHC) to homocysteine (HC) and 4,5-dihydroxy-2,3-pentadione (DPD). This Aeromonas hydrophila subsp. hydrophila (strain ATCC 7966 / DSM 30187 / BCRC 13018 / CCUG 14551 / JCM 1027 / KCTC 2358 / NCIMB 9240 / NCTC 8049) protein is S-ribosylhomocysteine lyase.